The following is a 136-amino-acid chain: Mitochondrial pyruvate carrier 1-like protein (136 aa).

Residues 2–19 (ARMAVLWRKMRDNFQSKE) lie on the Mitochondrial matrix side of the membrane. The helical transmembrane segment at 20 to 42 (FREYVSSTHFWGPAFSWGLPLAA) threads the bilayer. The Mother cell cytoplasmic portion of the chain corresponds to 43–51 (FKDMKASPE). A helical transmembrane segment spans residues 52–74 (IISGRMTTALILYSAIFMRFAYR). At 75-136 (VQPRNLLLMA…PGSQPPKQAS (62 aa)) the chain is on the mitochondrial matrix side. A disordered region spans residues 111 to 136 (EAKARDPPATAAAATSPGSQPPKQAS). Low complexity predominate over residues 117 to 136 (PPATAAAATSPGSQPPKQAS).

It belongs to the mitochondrial pyruvate carrier (MPC) (TC 2.A.105) family.

It localises to the mitochondrion inner membrane. It catalyses the reaction pyruvate(out) + H(+)(out) = pyruvate(in) + H(+)(in). Functionally, mediates the uptake of pyruvate into mitochondria. The sequence is that of Mitochondrial pyruvate carrier 1-like protein (MPC1L) from Homo sapiens (Human).